Here is an 89-residue protein sequence, read N- to C-terminus: Small ribosomal subunit protein uS19 (89 aa).

It belongs to the universal ribosomal protein uS19 family.

Its function is as follows. Protein S19 forms a complex with S13 that binds strongly to the 16S ribosomal RNA. In Xylella fastidiosa (strain 9a5c), this protein is Small ribosomal subunit protein uS19.